The sequence spans 171 residues: uncharacterized protein (171 aa).

Disordered stretches follow at residues 1–41 (MDAV…SKPK) and 114–147 (DSLG…RPKR). Residues 27-38 (AQQQQGPSAQGS) show a composition bias toward low complexity. Residues 116 to 125 (LGNTASSSSM) are compositionally biased toward polar residues.

This is an uncharacterized protein from Mus musculus (Mouse).